Here is a 142-residue protein sequence, read N- to C-terminus: MELRAFCVILLITVLAVSSQAAKNKKEKGKKGASDCTEWTWGSCIPNSKDCGAGTREGTCKEETRKLKCKIPCNWKKAFGADCKYKFENWGECNATTGQKVRSGTLKKALYNADCQQTVEATKPCSLKTKSKSKGKKGKGKE.

An N-terminal signal peptide occupies residues 1 to 20; it reads MELRAFCVILLITVLAVSSQ. 5 disulfide bridges follow: cysteine 36-cysteine 60, cysteine 44-cysteine 69, cysteine 51-cysteine 73, cysteine 83-cysteine 115, and cysteine 93-cysteine 125.

The protein belongs to the pleiotrophin family. As to expression, expression at the mid-gastrula stage begins in the neural anlage, and becomes increasingly prominent in the central nervous system and head mesenchyme during neurula stages. Although the mRNA is localized to the developing central nervous system (CNS), the protein is deposited at the neuromuscular junction (NMJ). In the tailbud stage embryo, expressed in the head and tail regions as well as in the CNS. In adults, expression is highest in the brain, eye and bone, with lower expression in the heart and lung. Not expressed in the ovary.

The protein resides in the secreted. In terms of biological role, secreted protein that functions as a cytokine and growth factor and mediates its signal through cell-surface proteoglycan and non-proteoglycan receptors. Binds cell-surface proteoglycan receptors via their chondroitin sulfate (CS) groups. Thereby regulates many processes like inflammatory response, cell proliferation, cell adhesion, cell growth, cell survival, tissue regeneration, cell differentiation and cell migration. Inhibits mesoderm formation and promotes neural formation during development. Plays a role in development of the neuromuscular junction (NMJ). Has antibacterial activity against both Gram-positive and Gram-negative bacteria. In Xenopus laevis (African clawed frog), this protein is Midkine-A (mdk-a).